The chain runs to 455 residues: Argininosuccinate lyase (455 aa).

The protein belongs to the lyase 1 family. Argininosuccinate lyase subfamily.

Its subcellular location is the cytoplasm. It carries out the reaction 2-(N(omega)-L-arginino)succinate = fumarate + L-arginine. It participates in amino-acid biosynthesis; L-arginine biosynthesis; L-arginine from L-ornithine and carbamoyl phosphate: step 3/3. The sequence is that of Argininosuccinate lyase from Shewanella sp. (strain ANA-3).